Reading from the N-terminus, the 185-residue chain is MNWRSEHIWIELLKGSRKRGNFFWACILFLGSLGFLAVGASSYLGKNMISVLPSQQILFFPQGVVMSFYGIAGLFISSYLWCTILWNVGSGYDRFDRKEGIVCIFRWGFPGIKRRIFLQFLVRDIQSIRIQVKEGLYPRRILYMEIRGQGVIPLTRTDEKFFTPREIEQKAAELAYFLRVPIEVF.

The next 2 helical transmembrane spans lie at 21 to 43 (NFFWACILFLGSLGFLAVGASSY) and 63 to 85 (GVVMSFYGIAGLFISSYLWCTIL).

The protein belongs to the Ycf4 family.

It localises to the plastid. It is found in the chloroplast thylakoid membrane. Its function is as follows. Seems to be required for the assembly of the photosystem I complex. The polypeptide is Photosystem I assembly protein Ycf4 (Saccharum hybrid (Sugarcane)).